Here is a 142-residue protein sequence, read N- to C-terminus: Transcriptional regulator MraZ (142 aa).

2 SpoVT-AbrB domains span residues 5–51 (ASAL…PRPE) and 77–120 (AMDV…DAQT).

Belongs to the MraZ family. In terms of assembly, forms oligomers.

It is found in the cytoplasm. The protein localises to the nucleoid. The chain is Transcriptional regulator MraZ from Burkholderia mallei (strain NCTC 10247).